The chain runs to 596 residues: DNA mismatch repair protein MutL (596 aa).

It belongs to the DNA mismatch repair MutL/HexB family.

Functionally, this protein is involved in the repair of mismatches in DNA. It is required for dam-dependent methyl-directed DNA mismatch repair. May act as a 'molecular matchmaker', a protein that promotes the formation of a stable complex between two or more DNA-binding proteins in an ATP-dependent manner without itself being part of a final effector complex. The polypeptide is DNA mismatch repair protein MutL (Leptospira borgpetersenii serovar Hardjo-bovis (strain L550)).